We begin with the raw amino-acid sequence, 262 residues long: Proteasome subunit alpha (262 aa).

The segment at 235 to 262 is disordered; it reads LLPTTGESDAGDSGADGSPSGDSPDTSA.

Belongs to the peptidase T1A family. As to quaternary structure, the 20S proteasome core is composed of 14 alpha and 14 beta subunits that assemble into four stacked heptameric rings, resulting in a barrel-shaped structure. The two inner rings, each composed of seven catalytic beta subunits, are sandwiched by two outer rings, each composed of seven alpha subunits. The catalytic chamber with the active sites is on the inside of the barrel. Has a gated structure, the ends of the cylinder being occluded by the N-termini of the alpha-subunits. Is capped by the proteasome-associated ATPase, ARC.

The protein resides in the cytoplasm. It functions in the pathway protein degradation; proteasomal Pup-dependent pathway. The formation of the proteasomal ATPase ARC-20S proteasome complex, likely via the docking of the C-termini of ARC into the intersubunit pockets in the alpha-rings, may trigger opening of the gate for substrate entry. Interconversion between the open-gate and close-gate conformations leads to a dynamic regulation of the 20S proteasome proteolysis activity. In terms of biological role, component of the proteasome core, a large protease complex with broad specificity involved in protein degradation. This Gordonia bronchialis (strain ATCC 25592 / DSM 43247 / BCRC 13721 / JCM 3198 / KCTC 3076 / NBRC 16047 / NCTC 10667) (Rhodococcus bronchialis) protein is Proteasome subunit alpha.